Consider the following 121-residue polypeptide: uncharacterized protein (121 aa).

The N-terminal stretch at 1–31 (MILNNKGFIRILEATIAGIMVILVFSYLVMS) is a signal peptide.

To B.burgdorferi BB0465 N-terminal region.

This is an uncharacterized protein from Methanocaldococcus jannaschii (strain ATCC 43067 / DSM 2661 / JAL-1 / JCM 10045 / NBRC 100440) (Methanococcus jannaschii).